Consider the following 235-residue polypeptide: tRNA (guanine-N(1)-)-methyltransferase (235 aa).

S-adenosyl-L-methionine-binding positions include Gly-112 and Ile-132 to Ile-137.

Belongs to the RNA methyltransferase TrmD family. In terms of assembly, homodimer.

The protein resides in the cytoplasm. It carries out the reaction guanosine(37) in tRNA + S-adenosyl-L-methionine = N(1)-methylguanosine(37) in tRNA + S-adenosyl-L-homocysteine + H(+). In terms of biological role, specifically methylates guanosine-37 in various tRNAs. The polypeptide is tRNA (guanine-N(1)-)-methyltransferase (Anaplasma marginale (strain Florida)).